We begin with the raw amino-acid sequence, 369 residues long: S-adenosylmethionine decarboxylase proenzyme 2 (369 aa).

Residues Glu-9 and Glu-12 contribute to the active site. The active-site Schiff-base intermediate with substrate; via pyruvic acid is the Ser-69. Position 69 is a pyruvic acid (Ser); by autocatalysis (Ser-69). Cys-83 acts as the Proton donor; for catalytic activity in catalysis. Active-site proton acceptor; for processing activity residues include Ser-236 and His-249.

It belongs to the eukaryotic AdoMetDC family. It depends on pyruvate as a cofactor. Is synthesized initially as an inactive proenzyme. Formation of the active enzyme involves a self-maturation process in which the active site pyruvoyl group is generated from an internal serine residue via an autocatalytic post-translational modification. Two non-identical subunits are generated from the proenzyme in this reaction, and the pyruvate is formed at the N-terminus of the alpha chain, which is derived from the carboxyl end of the proenzyme. The post-translation cleavage follows an unusual pathway, termed non-hydrolytic serinolysis, in which the side chain hydroxyl group of the serine supplies its oxygen atom to form the C-terminus of the beta chain, while the remainder of the serine residue undergoes an oxidative deamination to produce ammonia and the pyruvoyl group blocking the N-terminus of the alpha chain.

The enzyme catalyses S-adenosyl-L-methionine + H(+) = S-adenosyl 3-(methylsulfanyl)propylamine + CO2. It participates in amine and polyamine biosynthesis; S-adenosylmethioninamine biosynthesis; S-adenosylmethioninamine from S-adenosyl-L-methionine: step 1/1. This chain is S-adenosylmethionine decarboxylase proenzyme 2 (SAMDC2), found in Brassica juncea (Indian mustard).